Reading from the N-terminus, the 565-residue chain is Small ribosomal subunit protein bS1 (565 aa).

S1 motif domains follow at residues 30–96 (SSVI…LSRD), 114–180 (NEKV…VSRR), 201–269 (GQVI…LGMK), 286–356 (NARF…LGLK), 373–443 (GSTV…LGVK), and 454–529 (GDVK…VSIK).

It belongs to the bacterial ribosomal protein bS1 family. The initiator methionine may be removed.

Its function is as follows. Binds mRNA; thus facilitating recognition of the initiation point. It is needed to translate mRNA with a short Shine-Dalgarno (SD) purine-rich sequence. The protein is Small ribosomal subunit protein bS1 (rpsA) of Rhodopseudomonas palustris (strain ATCC BAA-98 / CGA009).